Reading from the N-terminus, the 1161-residue chain is Voltage-gated inwardly rectifying potassium channel KCNH2 (1161 aa).

Residues 1–405 (MPVRRGHVAP…RIHRWTILHY (405 aa)) are Cytoplasmic-facing. Residues 17–88 (TIIRKFEGQS…AAQIAQALLG (72 aa)) enclose the PAS domain. A PAC domain is found at 92–144 (RKVEIAFYRKDGSCFLCLVDVVPVKNEDGAVIMFILNFEVVMEKDMVGSPARD). The segment at 233–286 (ALVGSCSPPPPVSAPGPHPSLRAHSLNPDASGSSCSLARTRSRESCASVRRASS) is disordered. A phosphoserine mark is found at serine 239 and serine 245. The span at 239 to 250 (SPPPPVSAPGPH) shows a compositional bias: pro residues. The segment covering 260–271 (PDASGSSCSLAR) has biased composition (polar residues). Serine 285, serine 286, serine 322, and serine 353 each carry phosphoserine. The chain crosses the membrane as a helical span at residues 406–426 (SPFKAVWDWLILLLVIYTAVF). Topologically, residues 427 to 452 (TPYSAAFLLKETEEGPPAPECGYACQ) are extracellular. The helical transmembrane segment at 453 to 473 (PLAVVDLIVDIMFIVDILINF) threads the bilayer. The Cytoplasmic segment spans residues 474-497 (RTTYVNANEEVVSHPGRIAVHYFK). Residues 498 to 518 (GWFLIDMVAAIPFDLLIFGSG) form a helical membrane-spanning segment. Residues 519-522 (SEEL) are Extracellular-facing. Residues 523 to 543 (IGLLKTARLLRLVRVARKLDR) form a helical; Voltage-sensor membrane-spanning segment. Topologically, residues 544–549 (YSEYGA) are cytoplasmic. Residues 550-570 (AVLLLLMCTFALIAHWLACIW) form a helical membrane-spanning segment. Topologically, residues 571–613 (YAIGNMEQPHMDSRIGWLHNLGDQMGKPYNSSGLGGPSIKDKY) are extracellular. Asparagine 600 carries an N-linked (GlcNAc...) asparagine glycan. The pore-forming intramembrane region spans 614-634 (VTGLYFTFSSLTSVGFGNVSP). Positions 626 to 631 (SVGFGN) match the Selectivity filter motif. The Extracellular portion of the chain corresponds to 635-640 (NTNSEK). Residues 641-661 (IFSICVMLIGSLMYASIFGNV) form a helical membrane-spanning segment. Over 662–1161 (SAIIQRLYSG…LHRHGSDPGS (500 aa)) the chain is Cytoplasmic. The segment at 744-844 (PFRGATKDCL…IHRDDLLEVL (101 aa)) is cNMP-binding domain. Positions 872-985 (GSPGSTEWEG…TEDCEKSSDT (114 aa)) are disordered. 2 positions are modified to phosphoserine: serine 873 and serine 876. Residues 885-894 (RQRKRKLSFR) are compositionally biased toward basic residues. Positions 930–941 (GESPSSGPSSPE) are enriched in low complexity. Residues 962–972 (SPRPPGEPPGG) are compositionally biased toward pro residues. Residue arginine 1016 is modified to Omega-N-methylarginine. Residues 1037-1064 (RGDVESRLDALQRQLNRLETRLSADMAT) are a coiled coil. Residues 1121-1161 (ELPPGAPELPQEGPTRRLSLPGQLGALTSQPLHRHGSDPGS) are disordered. At serine 1139 the chain carries Phosphoserine.

This sequence belongs to the potassium channel family. H (Eag) (TC 1.A.1.20) subfamily. Kv11.1/KCNH2 sub-subfamily. As to quaternary structure, the potassium channel is probably composed of a homo- or heterotetrameric complex of pore-forming alpha subunits that can associate with modulating beta subunits. Interacts with DNAJB12 and DNAJB14; chaperones DNAJB12 and DNAJB14 promote tetramerization. Heteromultimer with KCNH6/ERG2 and KCNH7/ERG3. Interacts with ALG10B. Forms a stable complex with KCNE1 or KCNE2, and that this heteromultimerization regulates Inward rectifier potassium channel activity. Interacts with CANX. The core-glycosylated, but not the fully glycosylated form interacts with RNF207. Interacts with NDFIP1 and NDFIP2; this interaction decreases the cell membrane expression by targeting KCNH2, through interaction with NEDD4L, for the degradation through the multivesicular bodies (MVBs)-lysosomal pathway. Post-translationally, phosphorylated on serine and threonine residues. Phosphorylation by PKA inhibits ion conduction. As to expression, detected in heart, both in atrium and in left ventricle.

The protein resides in the cell membrane. The enzyme catalyses K(+)(in) = K(+)(out). In terms of biological role, pore-forming (alpha) subunit of voltage-gated inwardly rectifying potassium channel. Characterized by unusual gating kinetics by producing relatively small outward currents during membrane depolarization and large inward currents during subsequent repolarization which reflect a rapid inactivation during depolarization and quick recovery from inactivation but slow deactivation (closing) during repolarization. Channel properties are modulated by cAMP and subunit assembly. Forms a stable complex with KCNE1 or KCNE2, and that this heteromultimerization regulates inward rectifier potassium channel activity. The sequence is that of Voltage-gated inwardly rectifying potassium channel KCNH2 from Oryctolagus cuniculus (Rabbit).